The sequence spans 107 residues: Large ribosomal subunit protein P1 (107 aa).

The tract at residues 67 to 107 (GAAPAAAAPAAGGAPAAGAAPKKEEKKEPSEEEDMGFSLFD) is disordered. A compositionally biased stretch (low complexity) spans 69–86 (APAAAAPAAGGAPAAGAA).

It belongs to the eukaryotic ribosomal protein P1/P2 family. As to quaternary structure, P1 and P2 exist as dimers at the large ribosomal subunit.

Plays an important role in the elongation step of protein synthesis. The protein is Large ribosomal subunit protein P1 of Chlamydomonas reinhardtii (Chlamydomonas smithii).